The sequence spans 25 residues: Small ribosomal subunit protein eS32B (25 aa).

The tract at residues 1 to 25 is disordered; sequence MRAKWRKKRTRRLKRKRRKVRARSK.

The protein belongs to the eukaryotic ribosomal protein eS32 family. In terms of assembly, component of the small ribosomal subunit (SSU). Mature yeast ribosomes consist of a small (40S) and a large (60S) subunit. The 40S small subunit contains 1 molecule of ribosomal RNA (18S rRNA) and 33 different proteins (encoded by 57 genes). The large 60S subunit contains 3 rRNA molecules (25S, 5.8S and 5S rRNA) and 46 different proteins (encoded by 81 genes).

It localises to the cytoplasm. Functionally, component of the ribosome, a large ribonucleoprotein complex responsible for the synthesis of proteins in the cell. The small ribosomal subunit (SSU) binds messenger RNAs (mRNAs) and translates the encoded message by selecting cognate aminoacyl-transfer RNA (tRNA) molecules. The large subunit (LSU) contains the ribosomal catalytic site termed the peptidyl transferase center (PTC), which catalyzes the formation of peptide bonds, thereby polymerizing the amino acids delivered by tRNAs into a polypeptide chain. The nascent polypeptides leave the ribosome through a tunnel in the LSU and interact with protein factors that function in enzymatic processing, targeting, and the membrane insertion of nascent chains at the exit of the ribosomal tunnel. The protein is Small ribosomal subunit protein eS32B of Saccharomyces cerevisiae (strain ATCC 204508 / S288c) (Baker's yeast).